A 309-amino-acid polypeptide reads, in one-letter code: Protein MAK16 homolog (309 aa).

The disordered stretch occupies residues 194 to 309; it reads EADQFSEEEA…IEEETENQAN (116 aa). 2 stretches are compositionally biased toward acidic residues: residues 195 to 227 and 235 to 270; these read ADQF…DIED and VEGD…DDEE. Over residues 275–293 the composition is skewed to basic residues; sequence ITKKRGPTFKPTKKTPQKR. A compositionally biased stretch (acidic residues) spans 299–309; sequence EIEEETENQAN.

The protein belongs to the MAK16 family.

It is found in the nucleus. The protein resides in the nucleolus. The polypeptide is Protein MAK16 homolog (mak16l) (Dictyostelium discoideum (Social amoeba)).